A 355-amino-acid polypeptide reads, in one-letter code: 3'-5' exonuclease (355 aa).

The tract at residues 1–119 (MDKFLIKMPI…TPSPEKVKPE (119 aa)) is disordered. 2 stretches are compositionally biased toward basic and acidic residues: residues 13-29 (KNNE…KETP) and 71-91 (KNLD…ENPP). Residues S104 and S112 each carry the phosphoserine modification. The 162-residue stretch at 154–315 (TDVDVVPMAF…GQVIYRDLEQ (162 aa)) folds into the 3'-5' exonuclease domain. The Mg(2+) site is built by D164, E166, and D302.

It belongs to the WRNexo family.

Its subcellular location is the nucleus. In terms of biological role, has exonuclease activity on both single-stranded and duplex templates bearing overhangs, but not blunt ended duplex DNA, and cleaves in a 3'-5' direction. Essential for the formation of DNA replication focal centers. Has an important role in maintaining genome stability. The protein is 3'-5' exonuclease of Drosophila persimilis (Fruit fly).